The chain runs to 2130 residues: Bromodomain adjacent to zinc finger domain protein 2B (2130 aa).

7 disordered regions span residues 1 to 42 (MESG…TGAA), 82 to 118 (LFAP…SLNG), 151 to 293 (GGRK…QKQP), 491 to 518 (KTTG…PVSN), 543 to 633 (VDSD…SSIG), 756 to 790 (EGRR…GSTE), and 944 to 966 (RKKA…LNKE). The span at 8-33 (TSSSVSSTAAASSPVSSTPSVASAVS) shows a compositional bias: low complexity. Low complexity predominate over residues 183–206 (ESSSNSDSDSGSSSDTSSEGISSS). The span at 207–234 (DSDDLEEDEEEEEDQSAEESEDDESDSE) shows a compositional bias: acidic residues. The span at 250–270 (GVKDMKTDGQKAHEKSQEKRT) shows a compositional bias: basic and acidic residues. The segment covering 272–283 (QQIPLVSDSQTH) has biased composition (polar residues). Positions 284–293 (SSFQSQQKQP) are enriched in low complexity. The segment covering 492–505 (TTGNRTLVVPSTSP) has biased composition (polar residues). Residues 543 to 554 (VDSDAPSSKESD) show a composition bias toward basic and acidic residues. Over residues 555-611 (DSNDDDDDDEDEDEDDEDDDSDDSQSESDSNSESDTDGSEDEDDEDDKDQDESDTDT) the composition is skewed to acidic residues. The segment covering 623 to 633 (TGSSIKSSSIG) has biased composition (low complexity). The 76-residue stretch at 687 to 762 (VTDERELRVP…RAMEGRRGRP (76 aa)) folds into the MBD domain. Residues 756-775 (EGRRGRPPNPDRQHSREESR) are compositionally biased toward basic and acidic residues. Residues 797 to 984 (AKLLRKLQAQ…ELEMAKELKK (188 aa)) are a coiled coil. The DDT domain occupies 1010 to 1075 (GSTFSDCLMI…VTAAVCDPGL (66 aa)). Disordered regions lie at residues 1186–1265 (TGKR…DQTV), 1431–1454 (SLCS…NLFS), 1499–1545 (VTHV…PFAM), and 1773–1795 (HKKH…ERKN). Positions 1220–1244 (SDYDDDDDDDSDDQADEDDEDEEDK) are enriched in acidic residues. Residues 1245–1254 (EDKKGKKAEV) are compositionally biased toward basic and acidic residues. Residues 1514–1526 (SHPPSKSPSPVPS) are compositionally biased toward pro residues. A PHD-type zinc finger spans residues 1895–1945 (KVYCQICRKGDNEELLLLCDGCDKGCHTYCHRPKITTIPDGDWFCPACIAK). Positions 1957–2019 (QIKGKKSNEQ…KQENFTAIKK (63 aa)) are disordered. A compositionally biased stretch (basic and acidic residues) spans 1991–2002 (GKTEPKKRKMDE). The span at 2004–2014 (VSVSQGKQENF) shows a compositional bias: polar residues. The Bromo domain occupies 2022-2126 (RDDSKDLAIC…KYFEKKWTEI (105 aa)).

Belongs to the WAL family.

Its subcellular location is the nucleus. Its function is as follows. Regulatory subunit of the ATP-dependent BRF-1 and BRF-5 ISWI chromatin remodeling complexes, which form ordered nucleosome arrays on chromatin and facilitate access to DNA during DNA-templated processes such as DNA replication, transcription, and repair. Both complexes regulate the spacing of nucleosomes along the chromatin and have the ability to slide mononucleosomes to the center of a DNA template. The BRF-1 ISWI chromatin remodeling complex has a lower ATP hydrolysis rate than the BRF-5 ISWI chromatin remodeling complex. Chromatin reader protein. Represses the expression of mitochondrial function-related genes, perhaps by transcriptional regulation. The polypeptide is Bromodomain adjacent to zinc finger domain protein 2B (BAZ2B) (Gallus gallus (Chicken)).